The chain runs to 179 residues: MAKLHDYYKDEVVKKLMTQFNYNSVMQVPRVEKITLNMGVGEAIADKKLLDNAAADLAAISGQKPLITKARKSVAGFKIRQGYPIGCKVTLRGERMWEFFERLITIAVPRIRDFRGLSAKSFDGRGNYSMGVREQIIFPEIDYDKVDRVRGLDITITTTAKSDEEGRALLAAFDFPFRK.

The protein belongs to the universal ribosomal protein uL5 family. In terms of assembly, part of the 50S ribosomal subunit; part of the 5S rRNA/L5/L18/L25 subcomplex. Contacts the 5S rRNA and the P site tRNA. Forms a bridge to the 30S subunit in the 70S ribosome.

This is one of the proteins that bind and probably mediate the attachment of the 5S RNA into the large ribosomal subunit, where it forms part of the central protuberance. In the 70S ribosome it contacts protein S13 of the 30S subunit (bridge B1b), connecting the 2 subunits; this bridge is implicated in subunit movement. Contacts the P site tRNA; the 5S rRNA and some of its associated proteins might help stabilize positioning of ribosome-bound tRNAs. The chain is Large ribosomal subunit protein uL5 from Cronobacter sakazakii (strain ATCC BAA-894) (Enterobacter sakazakii).